The following is a 274-amino-acid chain: Guanylyl cyclase 1 (274 aa).

As to quaternary structure, functions both as monomer and homooligomer. Mg(2+) serves as cofactor.

It catalyses the reaction GTP = 3',5'-cyclic GMP + diphosphate. The protein operates within nucleotide metabolism. In terms of biological role, magnesium-dependent guanylyl cyclase that catalyzes the formation of guanosine 3',5'-cyclic monophosphate (cGMP) from guanosine 5'-triphosphate (GTP). Can also use ATP as substrate with a low activity. This chain is Guanylyl cyclase 1, found in Arabidopsis thaliana (Mouse-ear cress).